The chain runs to 378 residues: Protein RecA (378 aa).

79–86 (GPESSGKT) contacts ATP.

This sequence belongs to the RecA family.

It localises to the cytoplasm. Its function is as follows. Can catalyze the hydrolysis of ATP in the presence of single-stranded DNA, the ATP-dependent uptake of single-stranded DNA by duplex DNA, and the ATP-dependent hybridization of homologous single-stranded DNAs. It interacts with LexA causing its activation and leading to its autocatalytic cleavage. In Streptococcus equi subsp. zooepidemicus (strain MGCS10565), this protein is Protein RecA.